A 209-amino-acid chain; its full sequence is Small ribosomal subunit protein uS5 (209 aa).

Residues 48-111 (LEDEVLDINM…DAAKLNITYI (64 aa)) form the S5 DRBM domain.

This sequence belongs to the universal ribosomal protein uS5 family. In terms of assembly, part of the 30S ribosomal subunit. Contacts protein S4.

Its function is as follows. With S4 and S12 plays an important role in translational accuracy. This Methanosarcina acetivorans (strain ATCC 35395 / DSM 2834 / JCM 12185 / C2A) protein is Small ribosomal subunit protein uS5.